We begin with the raw amino-acid sequence, 316 residues long: Apolipoprotein E (316 aa).

Residues 1 to 18 (MKVLWVALVITLLAGCQA) form the signal peptide. 8 repeat units span residues 79 to 100 (VLMD…GQLG), 101 to 122 (PIAQ…ARLA), 123 to 144 (SDME…AMMG), 145 to 166 (QTTD…KRLL), 167 to 188 (RDAE…EGSE), 189 to 210 (RSVS…VRAA), 211 to 232 (TVGT…QKLR), and 233 to 254 (GRME…EQLE). The interval 79–254 (VLMDETMKEV…HLEEMREQLE (176 aa)) is 8 X 22 AA approximate tandem repeats. The residue at position 142 (M142) is a Methionine sulfoxide. Residues 157–167 (HLRKLRKRLLR) form an LDL and other lipoprotein receptors binding region. 161–164 (LRKR) is a binding site for heparin. Residues 209-289 (AATVGTLASQ…SWFEPLVEDM (81 aa)) form a lipid-binding and lipoprotein association region. A heparin-binding site is contributed by 228 to 235 (HQKLRGRM). Residues 265 to 316 (SQMRLQAEAFQARLKSWFEPLVEDMQRQWAGLVEKVQLAMATSPTSAPIENS) form a homooligomerization region. A specificity for association with VLDL region spans residues 277–289 (RLKSWFEPLVEDM).

The protein belongs to the apolipoprotein A1/A4/E family. As to quaternary structure, homotetramer. May interact with ABCA1; functionally associated with ABCA1 in the biogenesis of HDLs. May interact with APP/A4 amyloid-beta peptide; the interaction is extremely stable in vitro but its physiological significance is unclear. May interact with MAPT. May interact with MAP2. In the cerebrospinal fluid, interacts with secreted SORL1. Interacts with PMEL; this allows the loading of PMEL luminal fragment on ILVs to induce fibril nucleation. APOE exists as multiple glycosylated and sialylated glycoforms within cells and in plasma. The extent of glycosylation and sialylation are tissue and context specific. Post-translationally, glycated in plasma VLDL. In terms of processing, phosphorylated by FAM20C in the extracellular medium.

It localises to the secreted. Its subcellular location is the extracellular space. The protein localises to the extracellular matrix. The protein resides in the extracellular vesicle. It is found in the endosome. It localises to the multivesicular body. In terms of biological role, APOE is an apolipoprotein, a protein associating with lipid particles, that mainly functions in lipoprotein-mediated lipid transport between organs via the plasma and interstitial fluids. APOE is a core component of plasma lipoproteins and is involved in their production, conversion and clearance. Apolipoproteins are amphipathic molecules that interact both with lipids of the lipoprotein particle core and the aqueous environment of the plasma. As such, APOE associates with chylomicrons, chylomicron remnants, very low density lipoproteins (VLDL) and intermediate density lipoproteins (IDL) but shows a preferential binding to high-density lipoproteins (HDL). It also binds a wide range of cellular receptors including the LDL receptor/LDLR and the very low-density lipoprotein receptor/VLDLR that mediate the cellular uptake of the APOE-containing lipoprotein particles. Finally, APOE also has a heparin-binding activity and binds heparan-sulfate proteoglycans on the surface of cells, a property that supports the capture and the receptor-mediated uptake of APOE-containing lipoproteins by cells. The protein is Apolipoprotein E (APOE) of Orcinus orca (Killer whale).